We begin with the raw amino-acid sequence, 37 residues long: uncharacterized protein (37 aa).

Residues 17-37 form a helical membrane-spanning segment; it reads TFVLIVVLFILLIIVGAAFIC.

Belongs to the SscA family.

The protein resides in the membrane. This is an uncharacterized protein from Bacillus subtilis (strain 168).